The primary structure comprises 178 residues: Meiotically up-regulated gene 95 protein (178 aa).

The Cytoplasmic portion of the chain corresponds to 1-12; the sequence is MNLFVYIAQNPT. Residues 13–30 form a helical; Signal-anchor for type II membrane protein membrane-spanning segment; the sequence is LTKWFFCCVCTILTMPFF. The Lumenal segment spans residues 31-178; that stretch reads KKPYRKRGIS…ESIEKPENDN (148 aa).

Its subcellular location is the endoplasmic reticulum membrane. In terms of biological role, has a role in meiosis. The protein is Meiotically up-regulated gene 95 protein (mug95) of Schizosaccharomyces pombe (strain 972 / ATCC 24843) (Fission yeast).